The sequence spans 192 residues: MASKGPSASASTENSSAGGPSGSSNGTGESGGQDSTFECNICLDTAKDAVISLCGHLFCWPCLHQWLETRPNRQVCPVCKAGISRDKVIPLYGRGSTGQQDPREKTPPRPQGQRPEPENRGGFQGFGFGDGGFQMSFGIGAFPFGIFATAFNINDGRPPPAVPGTPQYVDEQFLSRLFLFVALVIMFWLLIA.

Polar residues predominate over residues Met1–Asn14. The interval Met1–Ser30 is disordered. Residues Met1–Asp130 lie on the Cytoplasmic side of the membrane. Residues Ser15 to Thr27 are compositionally biased toward low complexity. Positions Glu29–Lys80 are required for ubiquitin ligase activity and protection against ER stress-induced cell death. The RING-type zinc-finger motif lies at Cys39–Lys80. The tract at residues Pro90–Phe123 is disordered. The chain crosses the membrane as a helical span at residues Gly131–Phe151. The Mitochondrial intermembrane portion of the chain corresponds to Asn152 to Glu171. The helical transmembrane segment at Gln172–Ala192 threads the bilayer.

As to quaternary structure, interacts with ATG5 and BNIP1.

It localises to the mitochondrion outer membrane. The protein localises to the endoplasmic reticulum membrane. It carries out the reaction S-ubiquitinyl-[E2 ubiquitin-conjugating enzyme]-L-cysteine + [acceptor protein]-L-lysine = [E2 ubiquitin-conjugating enzyme]-L-cysteine + N(6)-ubiquitinyl-[acceptor protein]-L-lysine.. It participates in protein modification; protein ubiquitination. Its function is as follows. E3 ubiquitin-protein ligase that regulates selective mitochondrial autophagy by mediating 'Lys-63'-linked polyubiquitination of BNIP1. Acts in the endoplasmic reticulum (ER)-associated degradation (ERAD) pathway, which targets misfolded proteins that accumulate in the endoplasmic reticulum (ER) for ubiquitination and subsequent proteasome-mediated degradation. Protects cells from ER stress-induced apoptosis. Responsible for the cotranslational ubiquitination and degradation of CFTR in the ERAD pathway. Also acts as a regulator of the innate antiviral response by catalyzing 'Lys-27'-linked polyubiquitination of CGAS, thereby promoting CGAS cyclic GMP-AMP synthase activity. Preferentially associates with the E2 enzymes UBE2J1 and UBE2J2. In Rattus norvegicus (Rat), this protein is E3 ubiquitin-protein ligase RNF185 (Rnf185).